A 366-amino-acid chain; its full sequence is Uroporphyrinogen decarboxylase (366 aa).

Substrate contacts are provided by residues 28 to 32, Asp-78, Tyr-160, Thr-215, and His-333; that span reads RQAGR.

The protein belongs to the uroporphyrinogen decarboxylase family. As to quaternary structure, homodimer.

Its subcellular location is the cytoplasm. It catalyses the reaction uroporphyrinogen III + 4 H(+) = coproporphyrinogen III + 4 CO2. It functions in the pathway porphyrin-containing compound metabolism; protoporphyrin-IX biosynthesis; coproporphyrinogen-III from 5-aminolevulinate: step 4/4. In terms of biological role, catalyzes the decarboxylation of four acetate groups of uroporphyrinogen-III to yield coproporphyrinogen-III. This is Uroporphyrinogen decarboxylase from Paraburkholderia phytofirmans (strain DSM 17436 / LMG 22146 / PsJN) (Burkholderia phytofirmans).